The following is a 643-amino-acid chain: Pseudouridylate synthase PUS7L (643 aa).

Catalysis depends on Asp284, which acts as the Nucleophile. The TRUD domain maps to 370 to 597; the sequence is GFVNYYGPQR…PGCYRPLLAK (228 aa).

This sequence belongs to the pseudouridine synthase TruD family.

It carries out the reaction a uridine in mRNA = a pseudouridine in mRNA. Functionally, pseudouridine synthase that catalyzes pseudouridylation of mRNAs. In Danio rerio (Zebrafish), this protein is Pseudouridylate synthase PUS7L (pus7l).